A 912-amino-acid polypeptide reads, in one-letter code: Isoleucine--tRNA ligase (912 aa).

The 'HIGH' region motif lies at 57 to 67 (PYANGDIHLGT). Residue Glu-549 coordinates L-isoleucyl-5'-AMP. The 'KMSKS' region motif lies at 590–594 (KMSKS). Lys-593 is an ATP binding site. Residues Cys-880, Cys-883, Cys-900, and Cys-903 each contribute to the Zn(2+) site.

It belongs to the class-I aminoacyl-tRNA synthetase family. IleS type 1 subfamily. In terms of assembly, monomer. Requires Zn(2+) as cofactor.

Its subcellular location is the cytoplasm. It catalyses the reaction tRNA(Ile) + L-isoleucine + ATP = L-isoleucyl-tRNA(Ile) + AMP + diphosphate. Functionally, catalyzes the attachment of isoleucine to tRNA(Ile). As IleRS can inadvertently accommodate and process structurally similar amino acids such as valine, to avoid such errors it has two additional distinct tRNA(Ile)-dependent editing activities. One activity is designated as 'pretransfer' editing and involves the hydrolysis of activated Val-AMP. The other activity is designated 'posttransfer' editing and involves deacylation of mischarged Val-tRNA(Ile). This is Isoleucine--tRNA ligase from Fervidobacterium pennivorans (strain DSM 9078 / Ven5).